Consider the following 710-residue polypeptide: E3 ubiquitin-protein ligase TRIM9 (710 aa).

The segment at 10-50 adopts an RING-type zinc-finger fold; sequence CPVCGSFYREPIILPCSHNLCQACARNILVQTPESESPQSR. Thr-41 is subject to Phosphothreonine. Ser-44, Ser-46, Ser-49, and Ser-53 each carry phosphoserine. B box-type zinc fingers lie at residues 163–212 and 224–266; these read AAAL…LVPP and RKVS…VKAL. Zn(2+) contacts are provided by Cys-168, Cys-171, Cys-193, His-198, Cys-229, His-232, Cys-252, and His-258. The stretch at 273–340 forms a coiled coil; that stretch reads HKSQLSQALN…KAQLLARVNK (68 aa). In terms of domain architecture, COS spans 374-432; that stretch reads IKENDPSGFLQISDALIRRVHLTEDQWGKGTLTPRMTTDFDLSLDNSPLLQSIHQLDFV. Residues 440–535 form the Fibronectin type-III domain; sequence VPATPILQLE…KTLVLQTSEV (96 aa). In terms of domain architecture, B30.2/SPRY spans 533–702; it reads SEVAWFAFDP…LHTGLPVPDF (170 aa).

In terms of assembly, interacts with SNAP25. In terms of processing, auto-ubiquitinated. Brain (at protein level). Expressed in fetal and adult brain.

It localises to the cytoplasmic vesicle. It is found in the secretory vesicle. Its subcellular location is the synaptic vesicle. The protein localises to the synapse. The protein resides in the cytoplasm. It localises to the cytoskeleton. It is found in the cell projection. Its subcellular location is the dendrite. The enzyme catalyses S-ubiquitinyl-[E2 ubiquitin-conjugating enzyme]-L-cysteine + [acceptor protein]-L-lysine = [E2 ubiquitin-conjugating enzyme]-L-cysteine + N(6)-ubiquitinyl-[acceptor protein]-L-lysine.. Its pathway is protein modification; protein ubiquitination. In terms of biological role, E3 ubiquitin-protein ligase which ubiquitinates itself in cooperation with an E2 enzyme UBE2D2/UBC4 and serves as a targeting signal for proteasomal degradation. May play a role in regulation of neuronal functions. May act as a regulator of synaptic vesicle exocytosis by controlling the availability of SNAP25 for the SNARE complex formation. The protein is E3 ubiquitin-protein ligase TRIM9 (Trim9) of Rattus norvegicus (Rat).